The following is a 523-amino-acid chain: 2-isopropylmalate synthase (523 aa).

One can recognise a Pyruvate carboxyltransferase domain in the interval 12–274 (VVIFDTTLRD…WNKIDTTQLT (263 aa)). Mn(2+) contacts are provided by D21, H209, H211, and N245. The interval 398 to 523 (KLLSLSVIAG…AQGAAAAAAS (126 aa)) is regulatory domain.

The protein belongs to the alpha-IPM synthase/homocitrate synthase family. LeuA type 1 subfamily. As to quaternary structure, homodimer. Requires Mn(2+) as cofactor.

The protein localises to the cytoplasm. It catalyses the reaction 3-methyl-2-oxobutanoate + acetyl-CoA + H2O = (2S)-2-isopropylmalate + CoA + H(+). The protein operates within amino-acid biosynthesis; L-leucine biosynthesis; L-leucine from 3-methyl-2-oxobutanoate: step 1/4. Its function is as follows. Catalyzes the condensation of the acetyl group of acetyl-CoA with 3-methyl-2-oxobutanoate (2-ketoisovalerate) to form 3-carboxy-3-hydroxy-4-methylpentanoate (2-isopropylmalate). This Bradyrhizobium sp. (strain BTAi1 / ATCC BAA-1182) protein is 2-isopropylmalate synthase.